The chain runs to 480 residues: Siroheme synthase 2 (480 aa).

Residues 1-202 (MDYLPMFARL…QDWQSAETWL (202 aa)) are precorrin-2 dehydrogenase /sirohydrochlorin ferrochelatase. Residues 22-23 (EV) and 43-44 (PE) contribute to the NAD(+) site. Ser126 carries the post-translational modification Phosphoserine. The interval 214 to 480 (GEVVLVGAGP…GCDLKLVNLA (267 aa)) is uroporphyrinogen-III C-methyltransferase. Pro223 lines the S-adenosyl-L-methionine pocket. Asp246 functions as the Proton acceptor in the catalytic mechanism. Lys268 (proton donor) is an active-site residue. S-adenosyl-L-methionine-binding positions include 299 to 301 (GGD), 329 to 330 (TA), Met381, and Gly410.

The protein in the N-terminal section; belongs to the precorrin-2 dehydrogenase / sirohydrochlorin ferrochelatase family. In the C-terminal section; belongs to the precorrin methyltransferase family.

The catalysed reaction is uroporphyrinogen III + 2 S-adenosyl-L-methionine = precorrin-2 + 2 S-adenosyl-L-homocysteine + H(+). The enzyme catalyses precorrin-2 + NAD(+) = sirohydrochlorin + NADH + 2 H(+). It catalyses the reaction siroheme + 2 H(+) = sirohydrochlorin + Fe(2+). The protein operates within cofactor biosynthesis; adenosylcobalamin biosynthesis; precorrin-2 from uroporphyrinogen III: step 1/1. Its pathway is cofactor biosynthesis; adenosylcobalamin biosynthesis; sirohydrochlorin from precorrin-2: step 1/1. It functions in the pathway porphyrin-containing compound metabolism; siroheme biosynthesis; precorrin-2 from uroporphyrinogen III: step 1/1. It participates in porphyrin-containing compound metabolism; siroheme biosynthesis; siroheme from sirohydrochlorin: step 1/1. The protein operates within porphyrin-containing compound metabolism; siroheme biosynthesis; sirohydrochlorin from precorrin-2: step 1/1. Functionally, multifunctional enzyme that catalyzes the SAM-dependent methylations of uroporphyrinogen III at position C-2 and C-7 to form precorrin-2 via precorrin-1. Then it catalyzes the NAD-dependent ring dehydrogenation of precorrin-2 to yield sirohydrochlorin. Finally, it catalyzes the ferrochelation of sirohydrochlorin to yield siroheme. This chain is Siroheme synthase 2, found in Aeromonas salmonicida (strain A449).